The chain runs to 323 residues: Probable cell division protein WhiA (323 aa).

Positions 275–309 (TLKELGEMLTTGQVSKSGINHRLRKLDQIAERLRS) form a DNA-binding region, H-T-H motif.

Belongs to the WhiA family.

Functionally, involved in cell division and chromosome segregation. In Listeria monocytogenes serotype 4a (strain HCC23), this protein is Probable cell division protein WhiA.